The chain runs to 335 residues: Nod factor export ATP-binding protein I (335 aa).

Over residues 1–10 (MTQEVPRRLE) the composition is skewed to basic and acidic residues. Residues 1-22 (MTQEVPRRLEPSPFEWKGDAGP) are disordered. Residues 37 to 267 (IDLASVTKSY…KIGCQVIEIY (231 aa)) form the ABC transporter domain. Position 69–76 (69–76 (GPNGAGKS)) interacts with ATP.

This sequence belongs to the ABC transporter superfamily. Lipooligosaccharide exporter (TC 3.A.1.102) family. The complex is composed of two ATP-binding proteins (NodI) and two transmembrane proteins (NodJ).

The protein resides in the cell inner membrane. Its function is as follows. Part of the ABC transporter complex NodIJ involved in the export of the nodulation factors (Nod factors), the bacterial signal molecules that induce symbiosis and subsequent nodulation induction. Nod factors are LCO (lipo-chitin oligosaccharide), a modified beta-1,4-linked N-acetylglucosamine oligosaccharide. This subunit is responsible for energy coupling to the transport system. This is Nod factor export ATP-binding protein I from Rhizobium meliloti (Ensifer meliloti).